A 308-amino-acid polypeptide reads, in one-letter code: Solute carrier family 25 member 47 (308 aa).

3 Solcar repeats span residues 1 to 80, 93 to 206, and 215 to 302; these read MDFV…CLAH, PTKA…LCEW, and PDVP…VLRL. 6 consecutive transmembrane segments (helical) span residues 3 to 23, 49 to 69, 98 to 116, 190 to 210, 217 to 237, and 273 to 293; these read FVAG…LDTV, VWGF…VSSV, ITLS…TSPT, GHSF…LSPA, VPGV…VATP, and VLFK…MVVF.

This sequence belongs to the mitochondrial carrier (TC 2.A.29) family. Specifically expressed in liver.

It localises to the mitochondrion inner membrane. The protein resides in the mitochondrion outer membrane. The enzyme catalyses NAD(+)(in) = NAD(+)(out). It catalyses the reaction acetyl-CoA(in) = acetyl-CoA(out). Functionally, mitochondrial NAD(+) transporter that acts as a 'metabolic gate' in hepatic lipogenesis. Provides NAD(+) substrate to mitochondrial SIRT3 deacetylase and enables its NAD(+)-dependent activities in mitochondrial energy metabolism. This triggers downstream activation of PRKAA1/AMPK-alpha signaling cascade that negatively regulates sterol regulatory element-binding protein (SREBP) transcriptional activities and ATP-consuming lipogenesis to restore cellular energy balance. May transport other mitochondrial metabolites having an aromatic nucleotide and phosphate groups, such as acetyl-CoA. Does not transport amino acids. The transport mechanism remains to be elucidated. The chain is Solute carrier family 25 member 47 from Homo sapiens (Human).